Reading from the N-terminus, the 333-residue chain is Acetoin:2,6-dichlorophenolindophenol oxidoreductase subunit alpha (333 aa).

In terms of assembly, tetramer of 2 alpha and 2 beta subunits. It depends on thiamine diphosphate as a cofactor.

Its pathway is ketone degradation; acetoin degradation. Its function is as follows. Catalyzes the 2,6-dichlorophenolindophenol-dependent cleavage of acetoin into acetate and acetaldehyde, in vitro. The alpha subunit is probably the catalytic subunit of the enzyme. This Cupriavidus necator (strain ATCC 17699 / DSM 428 / KCTC 22496 / NCIMB 10442 / H16 / Stanier 337) (Ralstonia eutropha) protein is Acetoin:2,6-dichlorophenolindophenol oxidoreductase subunit alpha (acoA).